A 169-amino-acid polypeptide reads, in one-letter code: Transmembrane protein B169L (169 aa).

2 consecutive transmembrane segments (helical) span residues 28–48 and 60–80; these read NPFI…FAIC and TAIY…YVLN. N88 carries an N-linked (GlcNAc...) asparagine; by host glycan. Residues 107-169 form a disordered region; that stretch reads DEIIPPISPP…EVIMPSQYNN (63 aa). Over residues 144–154 the composition is skewed to low complexity; sequence SKPASSADSKP.

Belongs to the asfivirus B169L family.

It localises to the host membrane. The protein resides in the virion. In Ornithodoros (relapsing fever ticks), this protein is Transmembrane protein B169L.